Reading from the N-terminus, the 104-residue chain is Chitin-binding protein 2 (104 aa).

In terms of assembly, oligomer in an unreduced state. Post-translationally, glycosylated.

Chitin-binding protein. Has antifungal activity against C.krusei, C.albicans, C.tropicalis and C.parapsilosis. Inhibits C.albicans by increasing cell membrane permeability and production of reactive oxygen species. Has no hemagglutinating activity. The sequence is that of Chitin-binding protein 2 from Moringa oleifera (Horseradish tree).